Here is a 141-residue protein sequence, read N- to C-terminus: Large ribosomal subunit protein uL16 (141 aa).

The disordered stretch occupies residues 1–21 (MLMPKRVKYRKQQRGHNRGMA).

This sequence belongs to the universal ribosomal protein uL16 family. As to quaternary structure, part of the 50S ribosomal subunit.

Binds 23S rRNA and is also seen to make contacts with the A and possibly P site tRNAs. The chain is Large ribosomal subunit protein uL16 from Roseiflexus castenholzii (strain DSM 13941 / HLO8).